The following is a 407-amino-acid chain: Protein phosphatase methylesterase 1 (407 aa).

The tract at residues 1 to 53 is disordered; it reads MSDLQKSFAKSKLAKLPPEPPPIPESVADEDDDSGSSTETVTPSPVKQLFARP. Active-site residues include S185, D211, and H342. A compositionally biased stretch (gly residues) spans 388 to 401; it reads GAGVPLGKAEGGTT. The disordered stretch occupies residues 388-407; it reads GAGVPLGKAEGGTTGSFKRS.

This sequence belongs to the AB hydrolase superfamily.

It carries out the reaction [phosphatase 2A protein]-C-terminal L-leucine methyl ester + H2O = [phosphatase 2A protein]-C-terminal L-leucine + methanol + H(+). Demethylates proteins that have been reversibly carboxymethylated. Demethylates the phosphatase PP2A catalytic subunit. The protein is Protein phosphatase methylesterase 1 (ppe1) of Emericella nidulans (strain FGSC A4 / ATCC 38163 / CBS 112.46 / NRRL 194 / M139) (Aspergillus nidulans).